The primary structure comprises 591 residues: Nuclear receptor subfamily 4 group A member 2 (591 aa).

2 disordered regions span residues 1-22 (MPCVQAQYGSSPQGASPASQSY) and 110-133 (SEEMMSHSGSVYYKPSSPPTSSTP). A compositionally biased stretch (low complexity) spans 8–22 (YGSSPQGASPASQSY). The segment at residues 253–328 (EGLCAVCGDN…VGMVKEVVRT (76 aa)) is a DNA-binding region (nuclear receptor). 2 consecutive NR C4-type zinc fingers follow at residues 256-276 (CAVCGDNAACQHYGVRTCEGC) and 292-311 (CLANKNCPVDKRRRNRCQYC). A Bipartite nuclear localization signal (NLS1) motif is present at residues 280 to 307 (FKRTVQKNAKYVCLANKNCPVDKRRRNR). Residues 330 to 354 (SLKGRRGRLPSKPKSPQEPSPPSPP) are disordered. A Nuclear localization signal (NLS1) motif is present at residues 331-343 (LKGRRGRLPSKPK). A compositionally biased stretch (pro residues) spans 345-354 (PQEPSPPSPP). The NR LBD domain maps to 353-588 (PPVSLISALV…AIIDKLFLDT (236 aa)). Positions 436 to 445 (FLELFVLRLA) match the nuclear export sequence (NES1) motif. Residues 561–570 (QGLQRIFYLK) carry the nuclear export sequence (NES2) motif.

It belongs to the nuclear hormone receptor family.

The protein localises to the cytoplasm. It localises to the nucleus. Functionally, transcriptional regulator which may play a role in the differentiation and maintenance of meso-diencephalic dopaminergic (mdDA) neurons. This chain is Nuclear receptor subfamily 4 group A member 2 (nr4a2), found in Xenopus tropicalis (Western clawed frog).